A 149-amino-acid polypeptide reads, in one-letter code: Large ribosomal subunit protein bL9 (149 aa).

Belongs to the bacterial ribosomal protein bL9 family.

Binds to the 23S rRNA. The chain is Large ribosomal subunit protein bL9 from Haemophilus influenzae (strain PittGG).